Here is a 61-residue protein sequence, read N- to C-terminus: Conotoxin 3 (61 aa).

An N-terminal signal peptide occupies residues 1–21 (MRCLPVFVILLLLIASVPSDA). The propeptide occupies 22 to 48 (VQLKTKDDMPLPSFNGNARRTPRMLSN). At W58 the chain carries 6'-bromotryptophan.

This sequence belongs to the conotoxin T superfamily. Post-translationally, contains 2 disulfide bonds that can be either 'C1-C3, C2-C4' or 'C1-C4, C2-C3', since these disulfide connectivities have been observed for conotoxins with cysteine framework V (for examples, see AC P0DQQ7 and AC P81755). Contains 2 disulfide bonds. As to expression, expressed by the venom duct.

It localises to the secreted. This is Conotoxin 3 from Conus textile (Cloth-of-gold cone).